The following is a 192-amino-acid chain: Iodate reductase subunit IdrB (192 aa).

Positions 1 to 52 (MSENIIPVRAVPAHDHEHDGERACMSRRRFLLFGGTSVALLSIASLPGVAQV) form a signal peptide, tat-type signal. Residues 102–173 (GADKDIVAFN…LEVQGDDIYA (72 aa)) enclose the Rieske domain. Residues cysteine 114, histidine 116, cysteine 135, and histidine 138 each coordinate [2Fe-2S] cluster.

This sequence belongs to the AOX family. In terms of assembly, the iodate reductase (Idr) complex is composed of a molybdopterin-dependent iodate reductase (IdrA and IdrB subunits) and two associated peroxidases (IdrP1 and IdrP2). [2Fe-2S] cluster is required as a cofactor. In terms of processing, predicted to be exported by the Tat system. The position of the signal peptide cleavage has not been experimentally proven.

Its subcellular location is the periplasm. Involved in iodate respiration. Probably catalyzes the reduction of iodate (IO(3)(-)) to hypoiodous acid (HIO) and H(2)O(2), using a reduced cytochrome c as the electron donor. The sequence is that of Iodate reductase subunit IdrB from Pseudomonas sp. (strain SCT).